A 623-amino-acid chain; its full sequence is DNA polymerase alpha subunit B (623 aa).

Positions 113–151 (IPKIKDEPSSSVDVSTARNKNNHNNNNNNNPSLPNKSMF) are disordered. The segment covering 121-130 (SSSVDVSTAR) has biased composition (polar residues).

The protein belongs to the DNA polymerase alpha subunit B family. DNA polymerase alpha:primase is a four subunit enzyme complex, which is assembled throughout the cell cycle, and consists of the two DNA polymerase subunits A and B, and the DNA primase large and small subunits. Subunit B binds to subunit A.

The protein localises to the nucleus. Its function is as follows. May play an essential role at the early stage of chromosomal DNA replication by coupling the polymerase alpha/primase complex to the cellular replication machinery. In Dictyostelium discoideum (Social amoeba), this protein is DNA polymerase alpha subunit B (polA2).